The sequence spans 291 residues: MALAARLLPLPLLSWSLPGRATRLRTLRTTEVKLTLNEFCCLCRRRLGSSAAPIPRCTWAWASPTMRSWGPRRPLLGRAEHSPALASLPASPIRSYSTEEQPQQRQRTRMIILGFSNPINWVRTRIYAFLIWAYFDKEFSIAEFSEGAKQAFAYVSKLLSQCKFDLLEELVAKEVLQVLKEKVASLSDNHKNALAADIDDIVYTSTGDISIYYDEKGRKFVNILMCFWYLTSANIPSESLSGANVFQVKLGDQSVETKQLLSASYEFQREFTQGVKPDWTIARIEHSKLLE.

A mitochondrion-targeting transit peptide spans 1 to 96; sequence MALAARLLPL…SLPASPIRSY (96 aa).

Interacts with AFG3L2. Interacts with SPG7. Interacts with SMDT1/EMRE (via the N-terminal transit peptide); interaction is direct and takes place before maturation of SMDT1/EMRE.

The protein resides in the mitochondrion matrix. In terms of biological role, promotes sorting of SMDT1/EMRE in mitochondria by ensuring its maturation. Interacts with the transit peptide region of SMDT1/EMRE precursor protein in the mitochondrial matrix, leading to protect it against protein degradation by YME1L1, thereby ensuring SMDT1/EMRE maturation by the mitochondrial processing peptidase (PMPCA and PMPCB). The chain is m-AAA protease-interacting protein 1, mitochondrial from Rattus norvegicus (Rat).